Reading from the N-terminus, the 215-residue chain is Cytochrome b6 (215 aa).

A helical membrane pass occupies residues 32–52 (IFYCLGGITLTCFLVQVATGF). A heme c-binding site is contributed by cysteine 35. Heme b is bound by residues histidine 86 and histidine 100. The next 3 helical transmembrane spans lie at 90–110 (ASMM…TGGF), 116–136 (LTWV…VTGY), and 186–206 (LHTF…FLMI). Histidine 187 and histidine 202 together coordinate heme b.

Belongs to the cytochrome b family. PetB subfamily. In terms of assembly, the 4 large subunits of the cytochrome b6-f complex are cytochrome b6, subunit IV (17 kDa polypeptide, PetD), cytochrome f and the Rieske protein, while the 4 small subunits are PetG, PetL, PetM and PetN. The complex functions as a dimer. Requires heme b as cofactor. Heme c is required as a cofactor.

It is found in the plastid. The protein localises to the chloroplast thylakoid membrane. Component of the cytochrome b6-f complex, which mediates electron transfer between photosystem II (PSII) and photosystem I (PSI), cyclic electron flow around PSI, and state transitions. This is Cytochrome b6 from Morus indica (Mulberry).